The primary structure comprises 157 residues: Cytochrome P450 monooxygenase atG (157 aa).

Residue C97 participates in heme binding.

It belongs to the cytochrome P450 family. Heme serves as cofactor.

The protein operates within secondary metabolite biosynthesis. Cytochrome P450 monooxygenase; part of the gene cluster that mediates the biosynthesis of terreic acid, a quinone epoxide inhibitor of Bruton's tyrosine kinase (BTK). The first step of the pathway is the synthesis of 6-methylsalicylic acid (6-MSA) by the 6-methylsalicylic acid synthase atX. In the biosynthesis of 6-MSA, atX utilizes one acetyl-CoA and three malonyl-CoAs as its substrates and catalyzes a series of programmed reactions including Claisen condensation, reduction, aldol cyclization, and the hydrolytic cleavage that yields 6-MSA. The 6-methylsalicylate 1-monooxygenase atA then catalyzes the decarboxylative hydroxylation of 6-MSA to 3-methylcatechol. The next step is the conversion of 3-methylcatechol to 3-methyl-1,2,4-benzenetriol by cytochrome P450 monooxygenase atE, which is enhanced by cytochrome P450 monooxygenase atG. Then, the epoxidase atD catalyzes the epoxidation and hydroxyl oxidation of 3-methyl-1,2,4-benzenetriol to terremutin. Lastly, GMC oxidoreductase atC oxidizes terremutin to terreic acid. The sequence is that of Cytochrome P450 monooxygenase atG from Aspergillus terreus (strain NIH 2624 / FGSC A1156).